The sequence spans 316 residues: Diacylglycerol kinase (316 aa).

A DAGKc domain is found at 1-132 (MRKRARIIYN…VDIGKMNNRY (132 aa)). ATP contacts are provided by residues 10–14 (NPTSG), T41, 67–73 (GDGTLNE), and T94. Residues K213, D216, and Y218 each coordinate Mg(2+). E273 functions as the Proton acceptor in the catalytic mechanism.

This sequence belongs to the diacylglycerol/lipid kinase family. Homodimer. Requires Mg(2+) as cofactor.

It catalyses the reaction a 1,2-diacyl-sn-glycerol + ATP = a 1,2-diacyl-sn-glycero-3-phosphate + ADP + H(+). Its function is as follows. Catalyzes the phosphorylation of diacylglycerol (DAG) into phosphatidic acid. Is a key enzyme involved in the production of lipoteichoic acid by reintroducing DAG formed from the breakdown of membrane phospholipids into the phosphatidylglycerol biosynthetic pathway. This chain is Diacylglycerol kinase (dagK), found in Staphylococcus epidermidis (strain ATCC 35984 / DSM 28319 / BCRC 17069 / CCUG 31568 / BM 3577 / RP62A).